A 198-amino-acid polypeptide reads, in one-letter code: Putative pseudouridine methyltransferase (198 aa).

Positions 132 and 186 each coordinate S-adenosyl-L-methionine.

The protein belongs to the methyltransferase superfamily. TrmY family.

It localises to the cytoplasm. This chain is Putative pseudouridine methyltransferase, found in Shewanella baltica (strain OS185).